A 185-amino-acid chain; its full sequence is Elongation factor P (185 aa).

Belongs to the elongation factor P family.

It is found in the cytoplasm. The protein operates within protein biosynthesis; polypeptide chain elongation. Its function is as follows. Involved in peptide bond synthesis. Stimulates efficient translation and peptide-bond synthesis on native or reconstituted 70S ribosomes in vitro. Probably functions indirectly by altering the affinity of the ribosome for aminoacyl-tRNA, thus increasing their reactivity as acceptors for peptidyl transferase. This Fervidobacterium nodosum (strain ATCC 35602 / DSM 5306 / Rt17-B1) protein is Elongation factor P.